The sequence spans 250 residues: Pimeloyl-[acyl-carrier protein] methyl ester esterase (250 aa).

Substrate-binding positions include W12, 71–72 (SL), and 138–142 (FVALQ). S71 acts as the Nucleophile in catalysis. Catalysis depends on residues D202 and H230. Residue H230 coordinates substrate.

The protein belongs to the AB hydrolase superfamily. Carboxylesterase BioH family. As to quaternary structure, monomer.

The protein resides in the cytoplasm. The catalysed reaction is 6-carboxyhexanoyl-[ACP] methyl ester + H2O = 6-carboxyhexanoyl-[ACP] + methanol + H(+). It functions in the pathway cofactor biosynthesis; biotin biosynthesis. In terms of biological role, the physiological role of BioH is to remove the methyl group introduced by BioC when the pimeloyl moiety is complete. It allows to synthesize pimeloyl-ACP via the fatty acid synthetic pathway through the hydrolysis of the ester bonds of pimeloyl-ACP esters. This chain is Pimeloyl-[acyl-carrier protein] methyl ester esterase, found in Aromatoleum aromaticum (strain DSM 19018 / LMG 30748 / EbN1) (Azoarcus sp. (strain EbN1)).